A 295-amino-acid polypeptide reads, in one-letter code: G1/S-specific cyclin-D1 (295 aa).

Residues 28–152 (LRAMLKAEET…LLVNKLKWNL (125 aa)) enclose the Cyclin N-terminal domain. The segment at 262 to 295 (AQQNMDPKAAEEEEEEEEEVDLACTPTDVRDVDI) is disordered. Lys269 is covalently cross-linked (Glycyl lysine isopeptide (Lys-Gly) (interchain with G-Cter in ubiquitin)). Residues 272–282 (EEEEEEEEEVD) show a composition bias toward acidic residues. At Thr286 the chain carries Phosphothreonine.

It belongs to the cyclin family. Cyclin D subfamily. In terms of assembly, interacts with either CDK4 or CDK6 protein kinase to form a serine/threonine kinase holoenzyme complex. The cyclin subunit imparts substrate specificity to the complex. Component of the ternary complex CCND1/CDK4/CDKN1B required for nuclear translocation and modulation of CDK4-mediated kinase activity. Interacts directly with CDKN1B. Can form similar complexes with either CDKN1A or CDKN2A. Interacts with UHRF2; the interaction ubiquitinates CCND1 and appears to occur independently of phosphorylation. Interacts with USP2. Interacts (via cyclin N-terminal domain) with INSM1 (via N-terminal region); the interaction competes with the binding of CCND1 to CDK4 during cell cycle progression and inhibits CDK4 activity. Interacts with CDK4; the interaction is prevented with the binding of CCND1 to INSM1 during cell cycle progression. Phosphorylation at Thr-286 by MAP kinases is required for ubiquitination and degradation by the DCX(AMBRA1) complex. It also plays an essential role for recognition by the FBXO31 component of SCF (SKP1-cullin-F-box) protein ligase complex following DNA damage. In terms of processing, ubiquitinated at Lys-269 by the DCX(AMBRA1) complex during the transition from G1 to S cell phase, leading to its degradation: ubiquitination is dependent on Thr-286 phosphorylation. The DCX(AMBRA1) complex represents the major regulator of CCND1 stability during the G1/S transition. Also ubiquitinated by the SCF(FBXO4) and Cul7-RING(FBXW8) ubiquitin-protein ligase complexes. Following DNA damage it is ubiquitinated by the SCF(FBXO31) protein ligase complex. SCF(FBXO31) ubiquitination is dependent on Thr-286 phosphorylation. Ubiquitinated also by UHRF2 apparently in a phosphorylation-independent manner. Ubiquitination leads to its degradation and G1 arrest. Deubiquitinated by USP2; leading to its stabilization.

It is found in the nucleus. It localises to the cytoplasm. The protein resides in the nucleus membrane. Its function is as follows. Regulatory component of the cyclin D1-CDK4 (DC) complex that phosphorylates and inhibits members of the retinoblastoma (RB) protein family including RB1 and regulates the cell-cycle during G(1)/S transition. Phosphorylation of RB1 allows dissociation of the transcription factor E2F from the RB/E2F complex and the subsequent transcription of E2F target genes which are responsible for the progression through the G(1) phase. Hypophosphorylates RB1 in early G(1) phase. Cyclin D-CDK4 complexes are major integrators of various mitogenenic and antimitogenic signals. Also a substrate for SMAD3, phosphorylating SMAD3 in a cell-cycle-dependent manner and repressing its transcriptional activity. Component of the ternary complex, cyclin D1/CDK4/CDKN1B, required for nuclear translocation and activity of the cyclin D-CDK4 complex. Exhibits transcriptional corepressor activity with INSM1 on the NEUROD1 and INS promoters in a cell cycle-independent manner. In Homo sapiens (Human), this protein is G1/S-specific cyclin-D1.